Here is a 108-residue protein sequence, read N- to C-terminus: Protein translation factor SUI1 (108 aa).

The interval 1-20 is disordered; the sequence is MSIENLKSFDPFADTGDDEA.

This sequence belongs to the SUI1 family.

Functionally, additional factor that functions in concert with eIF-2 and the initiator tRNA in directing the ribosome to the proper start site of translation. This chain is Protein translation factor SUI1 (SUI1A), found in Eremothecium gossypii (strain ATCC 10895 / CBS 109.51 / FGSC 9923 / NRRL Y-1056) (Yeast).